The chain runs to 101 residues: Apolipoprotein C-II (101 aa).

The N-terminal stretch at 1-22 (MGTRYLLVLLLVLLVLGFEVQG) is a signal peptide. The lipid binding stretch occupies residues 66–74 (TMDEKIRDI). A lipoprotein lipase cofactor region spans residues 78–101 (STAAVSTYAGIFTDQLLSMLKGDS).

It belongs to the apolipoprotein C2 family. Proapolipoprotein C-II is synthesized as a sialic acid containing glycoprotein which is subsequently desialylated prior to its proteolytic processing. Post-translationally, proapolipoprotein C-II, the major form found in plasma undergoes proteolytic cleavage of its N-terminal hexapeptide to generate apolipoprotein C-II, which occurs as the minor form in plasma. Highly expressed in the liver. Moderately expressed in the ileum, jejunum and ovary.

Its subcellular location is the secreted. Its function is as follows. Component of chylomicrons, very low-density lipoproteins (VLDL), low-density lipoproteins (LDL), and high-density lipoproteins (HDL) in plasma. Plays an important role in lipoprotein metabolism as an activator of lipoprotein lipase. Both proapolipoprotein C-II and apolipoprotein C-II can activate lipoprotein lipase. In Canis lupus familiaris (Dog), this protein is Apolipoprotein C-II (APOC2).